The sequence spans 160 residues: uncharacterized protein (160 aa).

The next 4 membrane-spanning stretches (helical) occupy residues 7–27, 48–68, 95–115, and 121–141; these read IFLK…CIFL, LVFI…YQAF, AVTI…MAEI, and IIVI…FAAV.

The protein resides in the cell membrane. This is an uncharacterized protein from Bacillus subtilis (strain 168).